Consider the following 215-residue polypeptide: Interleukin-12 subunit alpha (215 aa).

The first 22 residues, 1–22 (MCQSRYLLFLATLVLLNHLTSA), serve as a signal peptide directing secretion. 3 disulfide bridges follow: Cys-33–Cys-106, Cys-60–Cys-192, and Cys-81–Cys-119. Residues Asn-35, Asn-89, and Asn-167 are each glycosylated (N-linked (GlcNAc...) asparagine).

Belongs to the IL-6 superfamily. In terms of assembly, heterodimer with IL12B; disulfide-linked. This heterodimer is known as interleukin IL-12. Heterodimer with EBI3/IL27B; not disulfide-linked. This heterodimer is known as interleukin IL-35. Interacts with NBR1; this interaction promotes IL-12 secretion.

It localises to the secreted. Functionally, heterodimerizes with IL12B to form the IL-12 cytokine or with EBI3/IL27B to form the IL-35 cytokine. IL-12 is primarily produced by professional antigen-presenting cells (APCs) such as B-cells and dendritic cells (DCs) as well as macrophages and granulocytes and regulates T-cell and natural killer-cell responses, induces the production of interferon-gamma (IFN-gamma), favors the differentiation of T-helper 1 (Th1) cells and is an important link between innate resistance and adaptive immunity. Mechanistically, exerts its biological effects through a receptor composed of IL12R1 and IL12R2 subunits. Binding to the receptor results in the rapid tyrosine phosphorylation of a number of cellular substrates including the JAK family kinases TYK2 and JAK2. In turn, recruited STAT4 gets phosphorylated and translocates to the nucleus where it regulates cytokine/growth factor responsive genes. As part of IL-35, plays essential roles in maintaining the immune homeostasis of the liver microenvironment and also functions as an immune-suppressive cytokine. Mediates biological events through unconventional receptors composed of IL12RB2 and gp130/IL6ST heterodimers or homodimers. Signaling requires the transcription factors STAT1 and STAT4, which form a unique heterodimer that binds to distinct DNA sites. This Rattus norvegicus (Rat) protein is Interleukin-12 subunit alpha (Il12a).